Reading from the N-terminus, the 105-residue chain is uncharacterized protein (105 aa).

Positions 80–105 (TGGPTSSTCTRRSDLATGRGSDRRPD) are disordered.

This is an uncharacterized protein from Micromonospora rosea.